Consider the following 204-residue polypeptide: Large ribosomal subunit protein uL4 (204 aa).

A disordered region spans residues 44-76 (KRQGTQSAKTRSEVRGGGIKPWRQKGTGRARQG).

Belongs to the universal ribosomal protein uL4 family. In terms of assembly, part of the 50S ribosomal subunit.

Its function is as follows. One of the primary rRNA binding proteins, this protein initially binds near the 5'-end of the 23S rRNA. It is important during the early stages of 50S assembly. It makes multiple contacts with different domains of the 23S rRNA in the assembled 50S subunit and ribosome. In terms of biological role, forms part of the polypeptide exit tunnel. The chain is Large ribosomal subunit protein uL4 from Clostridium perfringens (strain ATCC 13124 / DSM 756 / JCM 1290 / NCIMB 6125 / NCTC 8237 / Type A).